We begin with the raw amino-acid sequence, 400 residues long: Bifunctional enzyme IspD/IspF (400 aa).

The interval 1-240 is 2-C-methyl-D-erythritol 4-phosphate cytidylyltransferase; sequence MQESTMKFGI…EKLSHALPDV (240 aa). The tract at residues 241–400 is 2-C-methyl-D-erythritol 2,4-cyclodiphosphate synthase; it reads RTGNGYDVHQ…ATVVYQGRPL (160 aa). The a divalent metal cation site is built by Asp247 and His249. 4-CDP-2-C-methyl-D-erythritol 2-phosphate-binding positions include 247-249 and 273-274; these read DVH and HS. Position 281 (His281) interacts with a divalent metal cation. 4-CDP-2-C-methyl-D-erythritol 2-phosphate-binding positions include 295–297, 371–374, Phe378, and Arg381; these read DIG and TTNE.

In the N-terminal section; belongs to the IspD/TarI cytidylyltransferase family. IspD subfamily. It in the C-terminal section; belongs to the IspF family. Requires a divalent metal cation as cofactor.

The enzyme catalyses 2-C-methyl-D-erythritol 4-phosphate + CTP + H(+) = 4-CDP-2-C-methyl-D-erythritol + diphosphate. It catalyses the reaction 4-CDP-2-C-methyl-D-erythritol 2-phosphate = 2-C-methyl-D-erythritol 2,4-cyclic diphosphate + CMP. The protein operates within isoprenoid biosynthesis; isopentenyl diphosphate biosynthesis via DXP pathway; isopentenyl diphosphate from 1-deoxy-D-xylulose 5-phosphate: step 2/6. Its pathway is isoprenoid biosynthesis; isopentenyl diphosphate biosynthesis via DXP pathway; isopentenyl diphosphate from 1-deoxy-D-xylulose 5-phosphate: step 4/6. Bifunctional enzyme that catalyzes the formation of 4-diphosphocytidyl-2-C-methyl-D-erythritol from CTP and 2-C-methyl-D-erythritol 4-phosphate (MEP) (IspD), and catalyzes the conversion of 4-diphosphocytidyl-2-C-methyl-D-erythritol 2-phosphate (CDP-ME2P) to 2-C-methyl-D-erythritol 2,4-cyclodiphosphate (ME-CPP) with a corresponding release of cytidine 5-monophosphate (CMP) (IspF). In Agrobacterium fabrum (strain C58 / ATCC 33970) (Agrobacterium tumefaciens (strain C58)), this protein is Bifunctional enzyme IspD/IspF.